The following is a 310-amino-acid chain: Nucleotide-binding protein MAP_1147 (310 aa).

30 to 37 (GLSGAGRG) provides a ligand contact to ATP. 81–84 (DVRS) serves as a coordination point for GTP.

This sequence belongs to the RapZ-like family.

Displays ATPase and GTPase activities. The sequence is that of Nucleotide-binding protein MAP_1147 from Mycolicibacterium paratuberculosis (strain ATCC BAA-968 / K-10) (Mycobacterium paratuberculosis).